A 715-amino-acid chain; its full sequence is Elongation factor G (715 aa).

The tr-type G domain maps to 8 to 290 (NRYRNIGICA…AVIDFLPAPT (283 aa)). Residues 17-24 (AHVDAGKT), 88-92 (DTPGH), and 142-145 (NKMD) contribute to the GTP site.

Belongs to the TRAFAC class translation factor GTPase superfamily. Classic translation factor GTPase family. EF-G/EF-2 subfamily.

It is found in the cytoplasm. Functionally, catalyzes the GTP-dependent ribosomal translocation step during translation elongation. During this step, the ribosome changes from the pre-translocational (PRE) to the post-translocational (POST) state as the newly formed A-site-bound peptidyl-tRNA and P-site-bound deacylated tRNA move to the P and E sites, respectively. Catalyzes the coordinated movement of the two tRNA molecules, the mRNA and conformational changes in the ribosome. This Pseudomonas fluorescens (strain ATCC BAA-477 / NRRL B-23932 / Pf-5) protein is Elongation factor G.